Consider the following 234-residue polypeptide: Nuclear transcription factor Y subunit B-6 (234 aa).

Disordered stretches follow at residues methionine 1–proline 21 and methionine 35–threonine 55. The DNA-binding element occupies methionine 63–isoleucine 69. A subunit association domain (SAD) region spans residues isoleucine 90 to isoleucine 101. Positions asparagine 206–tyrosine 234 are disordered. Low complexity predominate over residues serine 213–alanine 222.

It belongs to the NFYB/HAP3 subunit family. Heterotrimeric transcription factor composed of three components, NF-YA, NF-YB and NF-YC. NF-YB and NF-YC must interact and dimerize for NF-YA association and DNA binding. Interacts with PRN1. Binds directly with DPB3-1. In terms of tissue distribution, expressed in roots, flowers and developing siliques. Present in etiolated seedlings.

The protein resides in the nucleus. Its function is as follows. Component of the NF-Y/HAP transcription factor complex. The NF-Y complex stimulates the transcription of various genes by recognizing and binding to a CCAAT motif in promoters. Plays a role in the regulation of the embryogenesis. Involved in the abscisic acid (ABA) signaling pathway. The polypeptide is Nuclear transcription factor Y subunit B-6 (Arabidopsis thaliana (Mouse-ear cress)).